We begin with the raw amino-acid sequence, 192 residues long: Virion infectivity factor (192 aa).

The interval 14–17 is interaction with host APOBEC3F; F1-box; it reads DRMR. The segment at 40–44 is interaction with host APOBEC3G; G-box; it reads YRHHY. Residues 54 to 72 are interaction with host APOBEC3F and APOBEC3G; FG-box; it reads EVHIPLGEARLVVTTYWGL. Residues 74-79 form an interaction with host APOBEC3F; F2-box region; that stretch reads TGEKEW. Residues 75-114 form an RNA-binding region; it reads GEKEWHLGQGVSIEWRKRRYSTQVDPGLADQLIHMYYFDC. Thr-96 carries the phosphothreonine; by host MAP4K1 modification. Residues His-108, Cys-114, Cys-133, and His-139 each contribute to the Zn(2+) site. An HCCH motif motif is present at residues 108-139; the sequence is HMYYFDCFAESAIRKAILGHIVSPSCEYQAGH. Ser-144 is modified (phosphoserine; by host). The short motif at 144 to 153 is the BC-box-like motif element; the sequence is SLQYLALAAL. Positions 151–164 are multimerization; the sequence is AALIAPKKIKPPLP. Residues 151–180 form an SOCS box-like region; sequence AALIAPKKIKPPLPSVRKLTEDRWNKPQKT. Position 165 is a phosphoserine; by host MAP4K1 (Ser-165). The segment at 165-192 is disordered; it reads SVRKLTEDRWNKPQKTKGRRGSHTMNGH. The segment at 171-172 is membrane association; it reads ED. A compositionally biased stretch (basic residues) spans 176–186; the sequence is KPQKTKGRRGS. The residue at position 188 (Thr-188) is a Phosphothreonine; by host.

This sequence belongs to the primate lentivirus group Vif protein family. In terms of assembly, homomultimer; in vitro and presumably in vivo. Interacts with viral RNA and Pr55Gag precursor; these interactions mediate Vif incorporation into the virion. Interacts with the viral reverse transcriptase. Forms cullin-5-RING E3 ubiquitin-protein ligase complex (ECS complex) by interacting with host CUL5, RBX2, elongin BC complex (ELOB and ELOC) and CBFB/CBF-beta. Within the ECS complex, Vif interacts directly with host CUL5, ELOC and APOBEC (APOBEC3F and APOBEC3G) substrates. The ECS complex also contains some single-stranded RNA (ssRNA) that acts as a glue that bridges Vif with APOBEC (APOBEC3F and APOBEC3G) substrates. Interacts with host UBCE7IP1 isoform 3/ZIN and possibly with SAT. Interacts with host tyrosine kinases HCK and FYN; these interactions may decrease level of phosphorylated APOBEC3G incorporation into virions. Interacts with host ABCE1; this interaction may play a role in protecting viral RNA from damage during viral assembly. Interacts with host MDM2; this interaction targets Vif for degradation by the proteasome. In terms of processing, processed in virion by the viral protease. Post-translationally, highly phosphorylated on serine and threonine residues. Polyubiquitinated and degraded by the proteasome in the presence of APOBEC3G.

It localises to the host cytoplasm. It is found in the host cell membrane. The protein resides in the virion. Counteracts the innate antiviral activity of host APOBEC3F and APOBEC3G by promoting their ubiquitination and degradation. Acts as a substrate recognition component of an E3 ubiquitin-protein ligase complex: mechanistically, Vif hijacks a host cullin-5-RING E3 ubiquitin-protein ligase complex (ECS complex) and the transcription coactivator CBFB/CBF-beta to form an active E3 ubiquitin-protein ligase complex that targets APOBEC3G and APOBEC3F for polyubiquitination, leading to their degradation by the proteasome. Vif interaction with APOBEC3G also blocks its cytidine deaminase activity in a proteasome-independent manner, suggesting a dual inhibitory mechanism. May interact directly with APOBEC3G mRNA in order to inhibit its translation. Association with CBFB/CBF-beta also inhibits the transcription coactivator activity of CBFB/CBF-beta. Seems to play a role in viral morphology by affecting the stability of the viral nucleoprotein core. Finally, Vif also contributes to the G2 cell cycle arrest observed in HIV infected cells. In Human immunodeficiency virus type 1 group M subtype D (isolate NDK) (HIV-1), this protein is Virion infectivity factor.